A 67-amino-acid polypeptide reads, in one-letter code: MPVKFSKVLIPQPRSKFIKVRCPDCGNEQVVFSHAAMVVRCLVCGRVLAEPTGGKARLAGHVVKILE.

Zn(2+)-binding residues include Cys22, Cys25, Cys41, and Cys44. The C4-type zinc-finger motif lies at 22–44; the sequence is CPDCGNEQVVFSHAAMVVRCLVC.

Belongs to the eukaryotic ribosomal protein eS27 family. As to quaternary structure, part of the 30S ribosomal subunit. The cofactor is Zn(2+).

The polypeptide is Small ribosomal subunit protein eS27 (Pyrobaculum islandicum (strain DSM 4184 / JCM 9189 / GEO3)).